A 139-amino-acid polypeptide reads, in one-letter code: Ribonuclease P protein component (139 aa).

A disordered region spans residues 116–139 (FSKNKSTIGGEYSPKNEQCESELP).

This sequence belongs to the RnpA family. As to quaternary structure, consists of a catalytic RNA component (M1 or rnpB) and a protein subunit.

It catalyses the reaction Endonucleolytic cleavage of RNA, removing 5'-extranucleotides from tRNA precursor.. Its function is as follows. RNaseP catalyzes the removal of the 5'-leader sequence from pre-tRNA to produce the mature 5'-terminus. It can also cleave other RNA substrates such as 4.5S RNA. The protein component plays an auxiliary but essential role in vivo by binding to the 5'-leader sequence and broadening the substrate specificity of the ribozyme. This is Ribonuclease P protein component from Chlamydia abortus (strain DSM 27085 / S26/3) (Chlamydophila abortus).